Reading from the N-terminus, the 273-residue chain is NAD-dependent protein deacylase (273 aa).

The 269-residue stretch at 1-269 (MNLDNAIHEA…PRIVEQVKKI (269 aa)) folds into the Deacetylase sirtuin-type domain. Residues 25-44 (GAGVSAESGIPTFRDPGGVW) and 107-110 (QNID) contribute to the NAD(+) site. The active-site Proton acceptor is H125. Zn(2+) is bound by residues C133, C136, C173, and C176. NAD(+)-binding positions include 211-213 (GTS), 237-239 (NPN), and T255.

It belongs to the sirtuin family. Class III subfamily. The cofactor is Zn(2+).

The protein localises to the cytoplasm. It catalyses the reaction N(6)-acetyl-L-lysyl-[protein] + NAD(+) + H2O = 2''-O-acetyl-ADP-D-ribose + nicotinamide + L-lysyl-[protein]. In terms of biological role, NAD-dependent protein deacetylase which modulates the activities of several proteins which are inactive in their acetylated form. In Desulfosudis oleivorans (strain DSM 6200 / JCM 39069 / Hxd3) (Desulfococcus oleovorans), this protein is NAD-dependent protein deacylase (cobB).